We begin with the raw amino-acid sequence, 193 residues long: CASP-like protein 1E1 (193 aa).

Topologically, residues 1 to 30 (MESQNKASLPVMDGLERRVVASQSEGASTC) are cytoplasmic. A helical membrane pass occupies residues 31–51 (DLLLRVLALVLTLAAAIVLGV). Residues 52 to 86 (DKQTKVVPIKIVDTLPAINLPVSAKWHYLSAFTYS) lie on the Extracellular side of the membrane. The helical transmembrane segment at 87–107 (VASNAIACSYAALSLVLAVSG) threads the bilayer. Topologically, residues 108 to 113 (KKGIMS) are cytoplasmic. The chain crosses the membrane as a helical span at residues 114 to 134 (IVIVLDLLMVAMLFSSNGAAL). At 135–162 (AIGLMGYQGNSHVRWTKVCHVFGRFCNQ) the chain is on the extracellular side. Residues 163 to 183 (VAVSISLSLLGSILFLLLVGI) traverse the membrane as a helical segment. Residues 184 to 193 (TSLRLHKKSK) lie on the Cytoplasmic side of the membrane.

The protein belongs to the Casparian strip membrane proteins (CASP) family. As to quaternary structure, homodimer and heterodimers.

It localises to the cell membrane. The polypeptide is CASP-like protein 1E1 (Populus trichocarpa (Western balsam poplar)).